The primary structure comprises 445 residues: Tubulin beta chain (445 aa).

Positions 11, 69, 138, 142, 143, 144, 204, and 226 each coordinate GTP. Mg(2+) is bound at residue Glu69. Positions 426 to 445 (QDATAEEEGEFEEEEGDVEA) are disordered. A compositionally biased stretch (acidic residues) spans 429 to 445 (TAEEEGEFEEEEGDVEA).

The protein belongs to the tubulin family. Dimer of alpha and beta chains. A typical microtubule is a hollow water-filled tube with an outer diameter of 25 nm and an inner diameter of 15 nM. Alpha-beta heterodimers associate head-to-tail to form protofilaments running lengthwise along the microtubule wall with the beta-tubulin subunit facing the microtubule plus end conferring a structural polarity. Microtubules usually have 13 protofilaments but different protofilament numbers can be found in some organisms and specialized cells. Interacts with DCX/apicortin; the interaction stabilizes microtubule assembly. Mg(2+) is required as a cofactor.

The protein resides in the cytoplasm. It localises to the cytoskeleton. Its function is as follows. Tubulin is the major constituent of microtubules, a cylinder consisting of laterally associated linear protofilaments composed of alpha- and beta-tubulin heterodimers. Microtubules grow by the addition of GTP-tubulin dimers to the microtubule end, where a stabilizing cap forms. Below the cap, tubulin dimers are in GDP-bound state, owing to GTPase activity of alpha-tubulin. This Plasmodium falciparum protein is Tubulin beta chain.